A 535-amino-acid chain; its full sequence is CTP synthase (535 aa).

The tract at residues 1–268 is amidoligase domain; sequence MPNKYIVVTG…VSKILSRLKL (268 aa). Ser14 contributes to the CTP binding site. Ser14 is a UTP binding site. 15–20 lines the ATP pocket; the sequence is SVGKGT. Tyr55 provides a ligand contact to L-glutamine. Asp72 contributes to the ATP binding site. Asp72 and Glu142 together coordinate Mg(2+). CTP-binding positions include 149 to 151, 189 to 194, and Lys225; these read DIE and KTKPLQ. UTP-binding positions include 189 to 194 and Lys225; that span reads KTKPLQ. Val243 contacts ATP. The Glutamine amidotransferase type-1 domain occupies 302 to 535; that stretch reads YTKLKDSYIS…LGFIRAVASL (234 aa). Gly359 serves as a coordination point for L-glutamine. Cys386 serves as the catalytic Nucleophile; for glutamine hydrolysis. L-glutamine is bound by residues 387 to 390, Glu410, and Arg467; that span reads FGFQ. Catalysis depends on residues His511 and Glu513.

Belongs to the CTP synthase family. As to quaternary structure, homotetramer in the presence of ATP and UTP. The enzyme dissociates into homodimers in the absence of substrate nucleotides.

It catalyses the reaction UTP + L-glutamine + ATP + H2O = CTP + L-glutamate + ADP + phosphate + 2 H(+). The enzyme catalyses L-glutamine + H2O = L-glutamate + NH4(+). The catalysed reaction is UTP + NH4(+) + ATP = CTP + ADP + phosphate + 2 H(+). The protein operates within pyrimidine metabolism; CTP biosynthesis via de novo pathway; CTP from UDP: step 2/2. Its activity is regulated as follows. Allosterically activated by GTP, when glutamine is the substrate; GTP has no effect on the reaction when ammonia is the substrate. The allosteric effector GTP functions by stabilizing the protein conformation that binds the tetrahedral intermediate(s) formed during glutamine hydrolysis. Inhibited by the product CTP, via allosteric rather than competitive inhibition. Catalyzes the ATP-dependent amination of UTP to CTP with either L-glutamine or ammonia as the source of nitrogen. Regulates intracellular CTP levels through interactions with the four ribonucleotide triphosphates. The chain is CTP synthase from Saccharolobus solfataricus (strain ATCC 35092 / DSM 1617 / JCM 11322 / P2) (Sulfolobus solfataricus).